The sequence spans 603 residues: Polypeptide N-acetylgalactosaminyltransferase 10 (603 aa).

Topologically, residues 1-11 (MRRKEKRLLQA) are cytoplasmic. Residues 12–31 (VALALAALVLLPNVGLWALY) traverse the membrane as a helical; Signal-anchor for type II membrane protein segment. Residues 32 to 603 (RERQPDGSPG…STVLENFNKN (572 aa)) lie on the Lumenal side of the membrane. 2 N-linked (GlcNAc...) asparagine glycosylation sites follow: Asn-124 and Asn-146. Cystine bridges form between Cys-135-Cys-365, Cys-356-Cys-432, Cys-471-Cys-488, Cys-523-Cys-538, and Cys-563-Cys-578. Positions 144 to 253 (LPNTSIIIPF…VNWLPPLLDR (110 aa)) are catalytic subdomain A. Substrate is bound by residues Asp-185 and Arg-214. Asp-237 lines the Mn(2+) pocket. Residue Ser-238 coordinates substrate. His-239 lines the Mn(2+) pocket. A catalytic subdomain B region spans residues 311 to 373 (PFESPVMAGG…PCSRVGHIYR (63 aa)). Residue Trp-342 coordinates substrate. His-370 is a Mn(2+) binding site. Residues Arg-373 and Tyr-378 each coordinate substrate. The tract at residues 373 to 384 (RKYVPYKVPAGV) is flexible loop. Residues 458–590 (AAWGEIRNVG…SSLTQQWLFE (133 aa)) enclose the Ricin B-type lectin domain. Asn-593 carries N-linked (GlcNAc...) asparagine glycosylation.

The protein belongs to the glycosyltransferase 2 family. GalNAc-T subfamily. The cofactor is Mn(2+). As to expression, expressed at higher level than GALNT9. In the developing hindbrain region of 14.5 dpc embryos it accumulates in the rapidly dividing, undifferentiated ventricular zone adjacent to the pons. It also accumulates in the regions immediately rostral and caudal to the dorsal rhombic lips differentiating into the cerebellum. Not expressed in the developing choroid plexus.

Its subcellular location is the golgi apparatus membrane. The enzyme catalyses L-seryl-[protein] + UDP-N-acetyl-alpha-D-galactosamine = a 3-O-[N-acetyl-alpha-D-galactosaminyl]-L-seryl-[protein] + UDP + H(+). It carries out the reaction L-threonyl-[protein] + UDP-N-acetyl-alpha-D-galactosamine = a 3-O-[N-acetyl-alpha-D-galactosaminyl]-L-threonyl-[protein] + UDP + H(+). Its pathway is protein modification; protein glycosylation. In terms of biological role, catalyzes the initial reaction in O-linked oligosaccharide biosynthesis, the transfer of an N-acetyl-D-galactosamine residue to a serine or threonine residue on the protein receptor. Has activity toward Muc5Ac and EA2 peptide substrates. The sequence is that of Polypeptide N-acetylgalactosaminyltransferase 10 (Galnt10) from Mus musculus (Mouse).